A 327-amino-acid polypeptide reads, in one-letter code: Methionyl-tRNA formyltransferase (327 aa).

118–121 is a (6S)-5,6,7,8-tetrahydrofolate binding site; that stretch reads SLLP.

The protein belongs to the Fmt family.

The enzyme catalyses L-methionyl-tRNA(fMet) + (6R)-10-formyltetrahydrofolate = N-formyl-L-methionyl-tRNA(fMet) + (6S)-5,6,7,8-tetrahydrofolate + H(+). In terms of biological role, attaches a formyl group to the free amino group of methionyl-tRNA(fMet). The formyl group appears to play a dual role in the initiator identity of N-formylmethionyl-tRNA by promoting its recognition by IF2 and preventing the misappropriation of this tRNA by the elongation apparatus. This is Methionyl-tRNA formyltransferase from Corynebacterium jeikeium (strain K411).